Here is a 191-residue protein sequence, read N- to C-terminus: Molybdenum cofactor guanylyltransferase (191 aa).

GTP is bound by residues 13–15 (LAG), Lys-26, Asp-72, and Asp-102. A Mg(2+)-binding site is contributed by Asp-102.

It belongs to the MobA family. In terms of assembly, monomer. Requires Mg(2+) as cofactor.

The protein localises to the cytoplasm. The enzyme catalyses Mo-molybdopterin + GTP + H(+) = Mo-molybdopterin guanine dinucleotide + diphosphate. Transfers a GMP moiety from GTP to Mo-molybdopterin (Mo-MPT) cofactor (Moco or molybdenum cofactor) to form Mo-molybdopterin guanine dinucleotide (Mo-MGD) cofactor. The sequence is that of Molybdenum cofactor guanylyltransferase from Pseudomonas putida (strain ATCC 47054 / DSM 6125 / CFBP 8728 / NCIMB 11950 / KT2440).